A 196-amino-acid chain; its full sequence is Beta-crystallin A4 (196 aa).

An N-acetylthreonine modification is found at T2. The N-terminal arm stretch occupies residues 2-11; sequence TLQCTKSAGH. Beta/gamma crystallin 'Greek key' domains are found at residues 12–51 and 52–98; these read WRVV…KVLS and GAWV…RPVA. Positions 99–104 are connecting peptide; sequence CANHRD. 2 consecutive Beta/gamma crystallin 'Greek key' domains span residues 105-146 and 147-195; these read SRLT…HVQS and GAWV…RRIQ.

Homo/heterodimer, or complexes of higher-order. The structure of beta-crystallin oligomers seems to be stabilized through interactions between the N-terminal arms.

Its function is as follows. Crystallins are the dominant structural components of the vertebrate eye lens. In Rattus norvegicus (Rat), this protein is Beta-crystallin A4 (Cryba4).